A 450-amino-acid chain; its full sequence is Na(+)/H(+) antiporter NhaA (450 aa).

A run of 11 helical transmembrane segments spans residues 24 to 44 (FFAI…LALV), 75 to 95 (LILW…GLEI), 111 to 131 (ALPI…YLAL), 140 to 160 (GWGV…SLLG), 169 to 189 (VFLT…IAFF), 196 to 216 (FSFL…NWLG), 224 to 244 (LLVG…ATIA), 318 to 338 (WVAW…TVSA), 352 to 372 (IFFG…WLLV), 390 to 410 (GIGW…TLAF), and 422 to 442 (SILC…RVLL).

This sequence belongs to the NhaA Na(+)/H(+) (TC 2.A.33) antiporter family.

The protein resides in the cell inner membrane. It catalyses the reaction Na(+)(in) + 2 H(+)(out) = Na(+)(out) + 2 H(+)(in). Functionally, na(+)/H(+) antiporter that extrudes sodium in exchange for external protons. In Oleidesulfovibrio alaskensis (strain ATCC BAA-1058 / DSM 17464 / G20) (Desulfovibrio alaskensis), this protein is Na(+)/H(+) antiporter NhaA.